We begin with the raw amino-acid sequence, 144 residues long: Acylphosphatase-like protein MJ1331 (144 aa).

Positions 8-100 (TYELRIYGNV…FPNGLNKIST (93 aa)) constitute an Acylphosphatase-like domain.

This is Acylphosphatase-like protein MJ1331 from Methanocaldococcus jannaschii (strain ATCC 43067 / DSM 2661 / JAL-1 / JCM 10045 / NBRC 100440) (Methanococcus jannaschii).